The sequence spans 328 residues: Phenylalanine--tRNA ligase alpha subunit (328 aa).

A Mg(2+)-binding site is contributed by Glu253.

The protein belongs to the class-II aminoacyl-tRNA synthetase family. Phe-tRNA synthetase alpha subunit type 1 subfamily. As to quaternary structure, tetramer of two alpha and two beta subunits. Mg(2+) serves as cofactor.

The protein localises to the cytoplasm. The catalysed reaction is tRNA(Phe) + L-phenylalanine + ATP = L-phenylalanyl-tRNA(Phe) + AMP + diphosphate + H(+). The protein is Phenylalanine--tRNA ligase alpha subunit of Coxiella burnetii (strain Dugway 5J108-111).